We begin with the raw amino-acid sequence, 473 residues long: Aspartyl/glutamyl-tRNA(Asn/Gln) amidotransferase subunit B (473 aa).

Belongs to the GatB/GatE family. GatB subfamily. As to quaternary structure, heterotrimer of A, B and C subunits.

The catalysed reaction is L-glutamyl-tRNA(Gln) + L-glutamine + ATP + H2O = L-glutaminyl-tRNA(Gln) + L-glutamate + ADP + phosphate + H(+). The enzyme catalyses L-aspartyl-tRNA(Asn) + L-glutamine + ATP + H2O = L-asparaginyl-tRNA(Asn) + L-glutamate + ADP + phosphate + 2 H(+). In terms of biological role, allows the formation of correctly charged Asn-tRNA(Asn) or Gln-tRNA(Gln) through the transamidation of misacylated Asp-tRNA(Asn) or Glu-tRNA(Gln) in organisms which lack either or both of asparaginyl-tRNA or glutaminyl-tRNA synthetases. The reaction takes place in the presence of glutamine and ATP through an activated phospho-Asp-tRNA(Asn) or phospho-Glu-tRNA(Gln). In Finegoldia magna (strain ATCC 29328 / DSM 20472 / WAL 2508) (Peptostreptococcus magnus), this protein is Aspartyl/glutamyl-tRNA(Asn/Gln) amidotransferase subunit B.